We begin with the raw amino-acid sequence, 506 residues long: MVTLNKVDIESEEYKQMLNDYSTYTSTFASGFISNMFSNGIVTEIEAEQLKNYFSNPDEFQEEIEDLAQYFYISTAEIHQLFELIEALPTLNYKIDSFNKVKSSDKHISLLNKSLHKVKHKRLTRDLLKQVATAGTLVGIWLGDAKSPYPFIFDEIKYVFPSFRRNGDWVCVVDMELFTKYKDDQRNELLKSLSPYIKQSDYENFMKDREKYRFKELPQERTFPLRTGTLKRNQGLGTSWVTPGLYDVLHKKKLKDVERSIANKIINAVAVLTIGTDKGNGEYTNMKLPKAVKQKIHGGVKTALEKNQKDGVTVVSIPDFADINFPDVKADGLDGAKFDHINSDIQSAYGLSGSLLNGDGGNYATSSLNLDTFYKRIGVLMEDIEQEVYQKLFNLVLPAAQKDNYYMNYDKDKPLTLKEKMDILIKLNDKGWSIKHVVDNLAGVSWESYLEQTLYETEELKLQEKIRPYQTSYTFTGNEVGRPNEGNKNNDNTVKSATSNGNDNPI.

The disordered stretch occupies residues 473 to 506; sequence YTFTGNEVGRPNEGNKNNDNTVKSATSNGNDNPI. The span at 486 to 506 shows a compositional bias: polar residues; it reads GNKNNDNTVKSATSNGNDNPI.

This Bacillus subtilis (strain 168) protein is SPbeta prophage-derived uncharacterized protein YonE (yonE).